Reading from the N-terminus, the 185-residue chain is Alpha-S1-casein (185 aa).

The first 15 residues, 1 to 15 (MRLLILTCLVAVALA), serve as a signal peptide directing secretion. Phosphoserine is present on residues Ser31, Ser33, Ser41, Ser71, Ser85, Ser86, Ser88, Ser89, Ser90, and Ser91.

Belongs to the alpha-casein family. In terms of assembly, heteromultimers of alpha-s1 casein and kappa-casein; disulfide-linked. Post-translationally, not glycosylated. In terms of tissue distribution, mammary gland specific. Secreted in milk.

Its subcellular location is the secreted. Its function is as follows. Important role in the capacity of milk to transport calcium phosphate. Casoxin D acts as opioid antagonist and has vasorelaxing activity mediated by bradykinin B1 receptors. This is Alpha-S1-casein (CSN1S1) from Homo sapiens (Human).